Consider the following 129-residue polypeptide: Large ribosomal subunit protein bL12 (129 aa).

It belongs to the bacterial ribosomal protein bL12 family. In terms of assembly, homodimer. Part of the ribosomal stalk of the 50S ribosomal subunit. Forms a multimeric L10(L12)X complex, where L10 forms an elongated spine to which 2 to 4 L12 dimers bind in a sequential fashion. Binds GTP-bound translation factors.

Forms part of the ribosomal stalk which helps the ribosome interact with GTP-bound translation factors. Is thus essential for accurate translation. In Mycobacteroides abscessus (strain ATCC 19977 / DSM 44196 / CCUG 20993 / CIP 104536 / JCM 13569 / NCTC 13031 / TMC 1543 / L948) (Mycobacterium abscessus), this protein is Large ribosomal subunit protein bL12.